A 228-amino-acid polypeptide reads, in one-letter code: Phosphatidate cytidylyltransferase (228 aa).

A run of 6 helical transmembrane segments spans residues 31-51 (FVIA…LVGL), 65-85 (INYL…LIFL), 93-113 (LVIM…MIGG), 131-151 (WTGL…VSLI), 165-185 (IYLF…DLFI), and 206-226 (GVLD…CINI).

The protein belongs to the CDS family.

The protein localises to the cell membrane. The catalysed reaction is a 1,2-diacyl-sn-glycero-3-phosphate + CTP + H(+) = a CDP-1,2-diacyl-sn-glycerol + diphosphate. It participates in phospholipid metabolism; CDP-diacylglycerol biosynthesis; CDP-diacylglycerol from sn-glycerol 3-phosphate: step 3/3. This chain is Phosphatidate cytidylyltransferase (cdsA), found in Rickettsia prowazekii (strain Madrid E).